The primary structure comprises 277 residues: Caspase-3 (277 aa).

At M1 the chain carries N-acetylmethionine. Propeptides lie at residues 1-9 (MENNETSVD) and 10-28 (SKSIKNFEVKTIHGSKSMD). N6-acetyllysine is present on K11. At S26 the chain carries Phosphoserine. Catalysis depends on residues H121 and C163. Position 163 is an S-nitrosocysteine; in inhibited form (C163).

It belongs to the peptidase C14A family. As to quaternary structure, heterotetramer that consists of two anti-parallel arranged heterodimers, each one formed by a 17 kDa (p17) and a 12 kDa (p12) subunit. Interacts with BIRC6/bruce. Cleavage by granzyme B, caspase-6, caspase-8 and caspase-10 generates the two active subunits. Additional processing of the propeptides is likely due to the autocatalytic activity of the activated protease. Active heterodimers between the small subunit of caspase-7 protease and the large subunit of caspase-3 also occur and vice versa. Post-translationally, S-nitrosylated on its catalytic site cysteine in unstimulated cell lines and denitrosylated upon activation of the Fas apoptotic pathway, associated with an increase in intracellular caspase activity. Fas therefore activates caspase-3 not only by inducing the cleavage of the caspase zymogen to its active subunits, but also by stimulating the denitrosylation of its active site thiol. In terms of processing, ubiquitinated by BIRC6; this activity is inhibited by DIABLO/SMAC.

The protein resides in the cytoplasm. It catalyses the reaction Strict requirement for an Asp residue at positions P1 and P4. It has a preferred cleavage sequence of Asp-Xaa-Xaa-Asp-|- with a hydrophobic amino-acid residue at P2 and a hydrophilic amino-acid residue at P3, although Val or Ala are also accepted at this position.. Its activity is regulated as follows. Inhibited by BIRC6; following inhibition of BIRC6-caspase binding by DIABLO/SMAC, BIRC6 is subjected to caspase cleavage, leading to an increase in active caspases. In terms of biological role, involved in the activation cascade of caspases responsible for apoptosis execution. At the onset of apoptosis, it proteolytically cleaves poly(ADP-ribose) polymerase PARP1 at a '216-Asp-|-Gly-217' bond. Cleaves and activates sterol regulatory element binding proteins (SREBPs) between the basic helix-loop-helix leucine zipper domain and the membrane attachment domain. Cleaves and activates caspase-6, -7 and -9 (CASP6, CASP7 and CASP9, respectively). Cleaves and inactivates interleukin-18 (IL18). Triggers cell adhesion in sympathetic neurons through RET cleavage. Cleaves IL-1 beta between an Asp and an Ala, releasing the mature cytokine which is involved in a variety of inflammatory processes. Cleaves and inhibits serine/threonine-protein kinase AKT1 in response to oxidative stress. Acts as an inhibitor of type I interferon production during virus-induced apoptosis by mediating cleavage of antiviral proteins CGAS, IRF3 and MAVS, thereby preventing cytokine overproduction. Also involved in pyroptosis by mediating cleavage and activation of gasdermin-E (GSDME). Cleaves XRCC4 and phospholipid scramblase proteins XKR4, XKR8 and XKR9, leading to promote phosphatidylserine exposure on apoptotic cell surface. Cleaves BIRC6 following inhibition of BIRC6-caspase binding by DIABLO/SMAC. The polypeptide is Caspase-3 (CASP3) (Mesocricetus auratus (Golden hamster)).